Consider the following 999-residue polypeptide: Ulvan lyase, long isoform (999 aa).

A signal peptide spans 1–21 (MKCLKTLLVSTTLLTAFSLNA). Residue 126–127 (SH) coordinates substrate. His-127 (proton donor/acceptor) is an active-site residue. The Ca(2+) site is built by Asp-189, Asp-199, and Lys-201. Substrate is bound by residues Tyr-280 and Arg-297. Ca(2+)-binding residues include Asp-300, Asp-303, and Tyr-305. Residue Tyr-361 participates in substrate binding.

It belongs to the polysaccharide lyase 24 family.

Its function is as follows. Ulvan lyase involved in ulvan degradation. Ulvan is the main polysaccharide component of the Ulvales (green seaweed) cell wall. It is composed of disaccharide building blocks comprising 3-sulfated rhamnose (Rha3S) linked to D-glucuronic acid (GlcA), L-iduronic acid (IduA), or D-xylose (Xyl). Ulvan lyase catalyzes preferentially the endolytic cleavage of the glycosidic bond between Rha3S and the uronic acid GlcA, but not IduA, producing oligosaccharides that have unsaturated 4-deoxy-L-threo-hex-4-enopyranosiduronic acid (deltaUA) at the non-reducing end. The most abundant end products in the degradation of the ulvan polysaccharide were deltaUA-Rha3S disaccharides and deltaUA-Rha3S-IduA-Rha3S and deltaUA-Rha3S-Xyl-Rha3S tetrasaccharides. The chain is Ulvan lyase, long isoform from Alteromonas sp. (strain LOR).